A 454-amino-acid chain; its full sequence is GA-binding protein alpha chain (454 aa).

Residues 168–251 (AALEGYRKEQ…SHLELLRKYV (84 aa)) form the PNT domain. A disordered region spans residues 295–316 (KVQRSPRISGEDRSSPGNRTGN). Residue serine 303 is modified to Phosphoserine. The ETS DNA-binding region spans 320–400 (IQLWQFLLEL…QGKRFVYKFV (81 aa)).

The protein belongs to the ETS family. Heterotetramer of two alpha and two beta subunits. As to expression, ubiquitous.

The protein resides in the nucleus. Functionally, transcription factor capable of interacting with purine rich repeats (GA repeats). Positively regulates transcription of transcriptional repressor Rhit/Zpf13. This chain is GA-binding protein alpha chain (Gabpa), found in Mus musculus (Mouse).